Here is a 182-residue protein sequence, read N- to C-terminus: Fatty-acid and retinol-binding protein 2 (182 aa).

The first 17 residues, 1 to 17 (MIRAFLVVALASVAVFS), serve as a signal peptide directing secretion. 2 coiled-coil regions span residues 46-73 (LKAITAEEKAALKELAQNHKEYKTEEEF) and 131-152 (TLDSLKELAKGYIAEYKALSDD).

Belongs to the fatty-acid and retinol-binding protein (FARBP) family.

It is found in the secreted. Its function is as follows. Probably binds lipids. The protein is Fatty-acid and retinol-binding protein 2 (far-2) of Caenorhabditis elegans.